Reading from the N-terminus, the 997-residue chain is Mannuronan C5-epimerase AlgE2 (997 aa).

PbH1 repeat units follow at residues 133-155 (DRDVTLERVEIREMSGYGFDPHE), 157-179 (TINLTIRDSVAHDNGLDGFVADF), 180-202 (QIGGVFENNVSYNNDRHGFNIVT), 204-226 (TNDFVLSNNVAYGNGGAGLVVQR), 257-279 (AHDVTLQNAEIYGNGLYGVRVYG), 280-315 (AEDVQILDNYIHDNSQNGSYAEILLQSYDDTAGVSG), and 320-359 (TTGTWIEGNTIVGSANSTYGIQERDDGTDYSSLYANSVSN). Hemolysin-type calcium-binding repeat units lie at residues 388 to 403 (GTAGNDTLGGSDAHET), 406 to 422 (GLDGNDRLNGGAGNDIL), 424 to 439 (GGAGRDNLTGGAGADL), 557 to 573 (GHAGNDTLDGGAGDDIL), 574 to 591 (VGGAGRDSLTGGAGADVF), 696 to 711 (GSAGNDSLQGTAADEV), 713 to 730 (HGGGGRDTLAGGAGADVF), 828 to 839 (GGDGNDTLSGSS), 846 to 862 (GGVGNDSLDGGAGNDIL), and 864 to 880 (GGAGRDTLSGGSGSDIF).

The protein belongs to the D-mannuronate C5-epimerase family. It depends on Ca(2+) as a cofactor.

Its subcellular location is the secreted. The enzyme catalyses [(1-&gt;4)-beta-D-mannuronosyl](n) = [alginate](n). The protein operates within glycan biosynthesis; alginate biosynthesis. With respect to regulation, inhibited by zinc. Converts beta-D-mannuronic acid (M) to alpha-L-guluronic acid (G), producing a polymer with gel-forming capacity, required for the formation of the cyst coat. In Azotobacter vinelandii, this protein is Mannuronan C5-epimerase AlgE2.